Reading from the N-terminus, the 348-residue chain is Dihydroorotase (348 aa).

Residues His13 and His15 each contribute to the Zn(2+) site. Residues 15–17 (HLR) and Asn41 each bind substrate. 3 residues coordinate Zn(2+): Lys99, His136, and His174. Residue Lys99 is modified to N6-carboxylysine. Substrate is bound at residue His136. Leu219 provides a ligand contact to substrate. Zn(2+) is bound at residue Asp247. Asp247 is a catalytic residue. Substrate contacts are provided by His251 and Ala263.

It belongs to the metallo-dependent hydrolases superfamily. DHOase family. Class II DHOase subfamily. As to quaternary structure, homodimer. It depends on Zn(2+) as a cofactor.

The catalysed reaction is (S)-dihydroorotate + H2O = N-carbamoyl-L-aspartate + H(+). Its pathway is pyrimidine metabolism; UMP biosynthesis via de novo pathway; (S)-dihydroorotate from bicarbonate: step 3/3. Catalyzes the reversible cyclization of carbamoyl aspartate to dihydroorotate. In Rhizobium johnstonii (strain DSM 114642 / LMG 32736 / 3841) (Rhizobium leguminosarum bv. viciae), this protein is Dihydroorotase.